We begin with the raw amino-acid sequence, 142 residues long: Large ribosomal subunit protein uL11 (142 aa).

It belongs to the universal ribosomal protein uL11 family. Part of the ribosomal stalk of the 50S ribosomal subunit. Interacts with L10 and the large rRNA to form the base of the stalk. L10 forms an elongated spine to which L12 dimers bind in a sequential fashion forming a multimeric L10(L12)X complex. Post-translationally, one or more lysine residues are methylated.

Its function is as follows. Forms part of the ribosomal stalk which helps the ribosome interact with GTP-bound translation factors. The protein is Large ribosomal subunit protein uL11 of Dichelobacter nodosus (strain VCS1703A).